Consider the following 77-residue polypeptide: Small ribosomal subunit protein bS16c (77 aa).

It belongs to the bacterial ribosomal protein bS16 family.

It is found in the plastid. It localises to the cyanelle. The protein is Small ribosomal subunit protein bS16c of Cyanophora paradoxa.